The primary structure comprises 388 residues: Adenosine deaminase-like protein (388 aa).

Basic residues predominate over residues 1–13 (MPNNSKHKKKQQR). The disordered stretch occupies residues 1-34 (MPNNSKHKKKQQRRQQEAQKKSRAKQIETDKKND). A compositionally biased stretch (basic and acidic residues) spans 14–34 (RQQEAQKKSRAKQIETDKKND). Zn(2+) contacts are provided by His-65 and His-67. N(6)-methyl-AMP-binding positions include His-67, His-114, 146–149 (TSPK), Asp-186, and Gly-218. His-245 provides a ligand contact to Zn(2+). 3 residues coordinate N(6)-methyl-AMP: Glu-248, Asp-326, and Asp-327. Glu-248 (proton donor) is an active-site residue. Residue Asp-326 coordinates Zn(2+).

It belongs to the metallo-dependent hydrolases superfamily. Adenosine and AMP deaminases family. Monomer. Zn(2+) serves as cofactor.

The catalysed reaction is N(6)-methyl-AMP + H2O + H(+) = IMP + methylamine. Catalyzes the hydrolysis of the free cytosolic methylated adenosine nucleotide N(6)-methyl-AMP (N6-mAMP) to produce inositol monophosphate (IMP) and methylamine. Is required for the catabolism of cytosolic N6-mAMP, which is derived from the degradation of mRNA containing N6-methylated adenine (m6A). The polypeptide is Adenosine deaminase-like protein (Caenorhabditis elegans).